We begin with the raw amino-acid sequence, 452 residues long: MTDNQYATEELNQLQKELVAKNPIDVLQFCANYFNSKLELQRSQLWQQQNKAKAAGINLFPSIDNVFNSDGGAIMTTNKRQPSFKSPFGDNDPTSIDHHHDDDPKEAPGASKQQNKAELFKGGFGVGKSTPSKPLQELDPNDPSHSASQDTDAAPPVPKSKIPVAFNANRRTSVSAEAMNPNKFKSDSWKPPINDLTAAQKVELSKTLGSNFLFRQLDVSSKKTVIEALGKKEFKNGDEIIKQGDEGDYFYIIEKGTVDFYVNGNQVNSSGEGSSFGELALMYNSPRAATAVAASDTGVTCWALDRQTFRRILLERTFNRRLMYEDFLKDVKVLSSLSSQERSKLADALSTEIYHKGDKIVKEGEQGENFYFIESGSCQVSKDGKGVLTKLSKGDYFGEVALLNDLPRQATVEALDTVIVATLGKSGFSRLLGPAVDILKSQDPTANQGSSN.

Residues 28–212 are dimerization and phosphorylation; that stretch reads QFCANYFNSK…ELSKTLGSNF (185 aa). The interval 74 to 163 is disordered; the sequence is IMTTNKRQPS…APPVPKSKIP (90 aa). Over residues 75-84 the composition is skewed to polar residues; the sequence is MTTNKRQPSF. A compositionally biased stretch (basic and acidic residues) spans 95–106; the sequence is SIDHHHDDDPKE. Ser173 carries the phosphoserine modification. Residues 213 to 330 and 333 to 451 each bind a nucleoside 3',5'-cyclic phosphate; these read LFRQ…FLKD and VLSS…QGSS. Residues Glu278, Arg287, Glu399, and Arg408 each contribute to the 3',5'-cyclic AMP site.

It belongs to the cAMP-dependent kinase regulatory chain family. Tetramer, composed of 2 regulatory (R) and 2 catalytic (C) subunits. In the presence of cAMP it dissociates into 2 active monomeric C subunits and an R dimer.

The chain is cAMP-dependent protein kinase regulatory subunit (PKAR) from Debaryomyces hansenii (strain ATCC 36239 / CBS 767 / BCRC 21394 / JCM 1990 / NBRC 0083 / IGC 2968) (Yeast).